The primary structure comprises 189 residues: Peptidyl-tRNA hydrolase (189 aa).

Phe15 contacts tRNA. Catalysis depends on His20, which acts as the Proton acceptor. Residues Tyr65, Asn67, and Asn113 each contribute to the tRNA site.

This sequence belongs to the PTH family. Monomer.

The protein localises to the cytoplasm. It carries out the reaction an N-acyl-L-alpha-aminoacyl-tRNA + H2O = an N-acyl-L-amino acid + a tRNA + H(+). In terms of biological role, hydrolyzes ribosome-free peptidyl-tRNAs (with 1 or more amino acids incorporated), which drop off the ribosome during protein synthesis, or as a result of ribosome stalling. Its function is as follows. Catalyzes the release of premature peptidyl moieties from peptidyl-tRNA molecules trapped in stalled 50S ribosomal subunits, and thus maintains levels of free tRNAs and 50S ribosomes. The polypeptide is Peptidyl-tRNA hydrolase (Phytoplasma australiense).